The sequence spans 156 residues: MVRITALMSGSILLFALQALAMPVETTSVEPAAEKRGLKLAFKRGEEVEPAEEKRGLKLAFKRGEEVEPAEEKRGLKLAFKRGEEVEPAEEKRGLKLAFKRGEEVEPAEEKRGLKLAFKRGEEVEPAEEKRGLKLAFKRGEEVEPAEEKRGLKLAF.

The signal sequence occupies residues 1–21; sequence MVRITALMSGSILLFALQALA. 7 propeptides span residues 22 to 36, 43 to 55, 62 to 74, 81 to 93, 100 to 112, 119 to 131, and 138 to 150; these read MPVE…AEKR and KRGE…EEKR.

VicA1 is processed by several endopeptidases including kexin proteases as well as the cluster-specific peptidases vicP1 and vicP2 to produce 7 identical copies of the hexapeptide Gly-Leu-Lys-Leu-Ala-Phe, that are further modified to yield victorins. After being excised from the precursor peptide, the core peptides are cyclized and modified post-translationally by enzymes encoded within the gene cluster. The ustYa family protein vicYb is required for the formation of the macrocycle in victorin and the copper amine oxidases (CAOs) vicK1 and vicK2 are responsible for converting victorin to the active form by oxidizing the N-terminal glycyl residue in the peptides to glyoxylate. Relaxed substrate specificity of enzymes in the victorin biosynthetic pathway results in a metabolic grid that produces a set of analogs including victorinines B, C, E or HV-toxin M.

Its pathway is mycotoxin biosynthesis. Functionally, ribosomally synthesized cyclic peptide victorin precursor, part of the gene cluster that mediates the biosynthesis of the secondary metabolite victorin, the molecular basis for Victoria blight of oats. The vicA1 translated product contains a 7-fold repeated peptide embedding the hexapeptide Gly-Leu-Lys-Leu-Ala-Phe, that is converted into the cyclic victorin. The protein is Ribosomally synthesized cyclic peptide victorin precursosr vicA1 of Bipolaris victoriae (strain FI3) (Victoria blight of oats agent).